Consider the following 494-residue polypeptide: MPLREVTMTLDSLRFDNAWARLPEDFFTRVSPATWKNTRLLDISPRGCRALGLDPACFDDDAPARETLRQLMGGETVLPGMAPLAQKYTGHQFGVYNPALGDGRGLLMGEAQTADGYWDLHLKGAGQTPYSRFGDGRAVLRSSVREYLAGEAMAGLGVPTTLALALATNDEKVQRERVEPGATLLRLAPSHVRFGHFEWLYQSRRHDDMRRLVDHVIERHRPALAASESPAEALFGDVVARTARLIAAWQAYGFVHAVMNTDNMSILGLTLDYGPYAFMDAYDPRLVPNHTDANGRYAFDQQPGVGLWNLSVLGQSLTPLAEPDALRDRLTEYEPALQQEYARLMRARLGLESVVEGDAQLVQDWLTLLAEAGADYHRAFRALGEWAVDDGEWLRQEVPVEGLSAWLSRYHERLQEEERDAASRRDAMQAVNPLYVLRTHLAQQVIEAAEAGDEAPLVEFRRLLADPFTARPGMERWAAAPPPQASVICLSCSS.

Residues glycine 101, glycine 103, arginine 104, lysine 123, aspartate 135, glycine 136, arginine 186, and arginine 193 each contribute to the ATP site. Residue aspartate 262 is the Proton acceptor of the active site. The Mg(2+) site is built by asparagine 263 and aspartate 272. Aspartate 272 is an ATP binding site.

This sequence belongs to the SELO family. Mg(2+) serves as cofactor. It depends on Mn(2+) as a cofactor.

The enzyme catalyses L-seryl-[protein] + ATP = 3-O-(5'-adenylyl)-L-seryl-[protein] + diphosphate. It catalyses the reaction L-threonyl-[protein] + ATP = 3-O-(5'-adenylyl)-L-threonyl-[protein] + diphosphate. It carries out the reaction L-tyrosyl-[protein] + ATP = O-(5'-adenylyl)-L-tyrosyl-[protein] + diphosphate. The catalysed reaction is L-histidyl-[protein] + UTP = N(tele)-(5'-uridylyl)-L-histidyl-[protein] + diphosphate. The enzyme catalyses L-seryl-[protein] + UTP = O-(5'-uridylyl)-L-seryl-[protein] + diphosphate. It catalyses the reaction L-tyrosyl-[protein] + UTP = O-(5'-uridylyl)-L-tyrosyl-[protein] + diphosphate. Functionally, nucleotidyltransferase involved in the post-translational modification of proteins. It can catalyze the addition of adenosine monophosphate (AMP) or uridine monophosphate (UMP) to a protein, resulting in modifications known as AMPylation and UMPylation. The protein is Protein nucleotidyltransferase YdiU of Chromohalobacter salexigens (strain ATCC BAA-138 / DSM 3043 / CIP 106854 / NCIMB 13768 / 1H11).